The following is a 68-amino-acid chain: MPRWNVCSYCGREFEPGTGKMFVRNDGRVLFFCSSKCEKYYFMGRNPRKLKWTKAFQEARLQRAKRRK.

4 residues coordinate Zn(2+): C7, C10, C33, and C37. The C4-type zinc finger occupies 7-37; the sequence is CSYCGREFEPGTGKMFVRNDGRVLFFCSSKC.

This sequence belongs to the eukaryotic ribosomal protein eL24 family. In terms of assembly, part of the 50S ribosomal subunit. Forms a cluster with proteins L3 and L14. Requires Zn(2+) as cofactor.

Functionally, binds to the 23S rRNA. This Thermococcus onnurineus (strain NA1) protein is Large ribosomal subunit protein eL24.